The chain runs to 255 residues: Proteasome subunit alpha (255 aa).

Residues 190–201 (PSTSGASGNGET) are compositionally biased toward polar residues. Residues 190-255 (PSTSGASGNG…DKSSGDGEQN (66 aa)) are disordered. Residues 202–217 (EPSKLEVAILDRERPG) show a composition bias toward basic and acidic residues.

This sequence belongs to the peptidase T1A family. In terms of assembly, the 20S proteasome core is composed of 14 alpha and 14 beta subunits that assemble into four stacked heptameric rings, resulting in a barrel-shaped structure. The two inner rings, each composed of seven catalytic beta subunits, are sandwiched by two outer rings, each composed of seven alpha subunits. The catalytic chamber with the active sites is on the inside of the barrel. Has a gated structure, the ends of the cylinder being occluded by the N-termini of the alpha-subunits. Is capped by the proteasome-associated ATPase, ARC.

It localises to the cytoplasm. It functions in the pathway protein degradation; proteasomal Pup-dependent pathway. With respect to regulation, the formation of the proteasomal ATPase ARC-20S proteasome complex, likely via the docking of the C-termini of ARC into the intersubunit pockets in the alpha-rings, may trigger opening of the gate for substrate entry. Interconversion between the open-gate and close-gate conformations leads to a dynamic regulation of the 20S proteasome proteolysis activity. Component of the proteasome core, a large protease complex with broad specificity involved in protein degradation. The polypeptide is Proteasome subunit alpha (Saccharomonospora viridis (strain ATCC 15386 / DSM 43017 / JCM 3036 / CCUG 5913 / NBRC 12207 / NCIMB 9602 / P101) (Thermoactinomyces viridis)).